Here is a 645-residue protein sequence, read N- to C-terminus: Transcription termination factor FttA (645 aa).

The segment at 10-77 (APSNQNIMAT…IIVRIDESVR (68 aa)) is KHa. The tract at residues 78–146 (KKEEDARKML…WTLRIRKATT (69 aa)) is KHb. A metallo-beta-lactamase N-terminus region spans residues 187 to 391 (EISLTALGGF…LLIESTYGAK (205 aa)). Zn(2+) contacts are provided by His250, His252, Asp254, His255, His337, and Asp360. Positions 392 to 586 (EDIQPTRQEV…CRMEKLDGFS (195 aa)) are beta-Casp. The metallo-beta-lactamase C-terminus stretch occupies residues 587-645 (GHSDYNQLTGFVQKLRPKLRRVLVNHGERRKSENLALAVRRMFRIPAHYPQIQESIKLF). His612 contributes to the Zn(2+) binding site.

The protein belongs to the metallo-beta-lactamase superfamily. RNA-metabolizing metallo-beta-lactamase-like family. FttA subfamily. In terms of assembly, homodimer. Interacts with RNA polymerase (RNAP), interacts with the Spt4-Spt5 complex. The cofactor is Zn(2+).

Functionally, terminates transcription on the whole genome. Termination is linked to FttA-mediated RNA cleavage and does not require NTP hydrolysis. Cleaves endonucleolytically at the RNA exit channel of RNA polymerase (RNAP); the 5'-3' exonuclease activity of this protein degrades the nascent RNA released from RNAP. Terminates transcription genome-wide in M.maripaludis. Restores wild-type growth to a strain of Methanococcus maripaludis depleted for this gene at 22 degrees Celsius and prevents transcriptional read-through. Transcription termination is most effective in vivo on RNAs with more than one U4-tract in their 3'-ends. Has endonuclease activity after U-rich tracts in transcription termination sequences. The protein is Transcription termination factor FttA of Cenarchaeum symbiosum (strain A).